A 382-amino-acid chain; its full sequence is uncharacterized protein (382 aa).

12 consecutive transmembrane segments (helical) span residues 14-34 (GLLL…LWLA), 45-65 (VVSS…GYVI), 79-99 (FIFA…SWLA), 102-122 (FVAG…LMCS), 131-151 (LLAA…LLVS), 157-177 (LMSV…PLLF), 204-224 (LGVN…GLMP), 235-255 (ASIG…QWPI), 270-290 (VQVF…AMAP), 291-311 (ALFI…AWAC), 325-345 (ALLL…AMLM), and 348-368 (FSDN…LLML).

This sequence belongs to the major facilitator superfamily. YcaD (TC 2.A.1.26) family.

It is found in the cell inner membrane. This is an uncharacterized protein from Shigella flexneri serotype 5b (strain 8401).